We begin with the raw amino-acid sequence, 96 residues long: (4S)-4-hydroxy-5-phosphonooxypentane-2,3-dione isomerase (96 aa).

Positions 2–91 constitute an ABM domain; the sequence is HVTLVEINVH…MTGPRKKRLF (90 aa).

The protein belongs to the LsrG family. Homodimer.

The protein localises to the cytoplasm. The catalysed reaction is (2S)-2-hydroxy-3,4-dioxopentyl phosphate = 3-hydroxy-2,4-dioxopentyl phosphate. Functionally, involved in the degradation of phospho-AI-2, thereby terminating induction of the lsr operon and closing the AI-2 signaling cycle. Catalyzes the conversion of (4S)-4-hydroxy-5-phosphonooxypentane-2,3-dione (P-DPD) to 3-hydroxy-5-phosphonooxypentane-2,4-dione (P-HPD). The chain is (4S)-4-hydroxy-5-phosphonooxypentane-2,3-dione isomerase from Shigella flexneri serotype 5b (strain 8401).